The chain runs to 72 residues: Disintegrin basilicin (72 aa).

One can recognise a Disintegrin domain in the interval 1–72 (AGEECDCGSP…ADCPRNHFHA (72 aa)). Cystine bridges form between Cys5–Cys20, Cys7–Cys15, Cys14–Cys37, Cys28–Cys34, Cys33–Cys58, and Cys46–Cys65. The Cell attachment site motif lies at 50-52 (RGD).

The protein belongs to the venom metalloproteinase (M12B) family. P-II subfamily. P-IIa sub-subfamily. Monomer (disintegrin). Expressed by the venom gland.

Its subcellular location is the secreted. Functionally, inhibits fibrinogen interaction with platelets. Acts by binding to alpha-IIb/beta-3 (ITGA2B/ITGB3) on the platelet surface and inhibits aggregation induced by ADP, thrombin, platelet-activating factor and collagen. This is Disintegrin basilicin from Crotalus basiliscus (Mexican west-coast rattlesnake).